Here is a 186-residue protein sequence, read N- to C-terminus: Probable GTP-binding protein EngB (186 aa).

In terms of domain architecture, EngB-type G spans 18-186; that stretch reads SKKEVCLIGR…LMLKIIDVIS (169 aa). Residues 26–33, 52–56, 69–72, 135–138, and 166–168 each bind GTP; these read GRSNVGKS, GRTVT, DLPG, NKID, and ISA. Ser-33 and Thr-54 together coordinate Mg(2+).

The protein belongs to the TRAFAC class TrmE-Era-EngA-EngB-Septin-like GTPase superfamily. EngB GTPase family. The cofactor is Mg(2+).

Necessary for normal cell division and for the maintenance of normal septation. This is Probable GTP-binding protein EngB from Mycoplasmoides gallisepticum (strain R(low / passage 15 / clone 2)) (Mycoplasma gallisepticum).